Reading from the N-terminus, the 351-residue chain is Probable galacturonosyltransferase-like 4 (351 aa).

Over 1-8 (MASRSLSY) the chain is Cytoplasmic. Residues 9–29 (TQLLGLLSFILLLVTTTTMAV) form a helical; Signal-anchor for type II membrane protein membrane-spanning segment. Residues 30–351 (RVGVILHKPS…YRSSRHSLEE (322 aa)) lie on the Lumenal side of the membrane. Asparagine 96 and asparagine 203 each carry an N-linked (GlcNAc...) asparagine glycan.

This sequence belongs to the glycosyltransferase 8 family.

The protein resides in the golgi apparatus membrane. It functions in the pathway glycan metabolism; pectin biosynthesis. In terms of biological role, may be involved in pectin and/or xylans biosynthesis in cell walls. This is Probable galacturonosyltransferase-like 4 (GATL4) from Arabidopsis thaliana (Mouse-ear cress).